The sequence spans 750 residues: Photosystem I P700 chlorophyll a apoprotein A1 (750 aa).

Transmembrane regions (helical) follow at residues 70–93, 156–179, 195–219, 291–309, 346–369, 385–411, 433–455, and 531–549; these read VFSAHFGQLSIIFLWLSGMYFHGA, LYCTAIGALIFASLMLFAGWFHYH, LNHHLAGLLGLGSLSWAGHQIHVSL, IAHHHLAIAILFLIAGHMY, WHAQLSLNLAMLGSTTIVVAHHMY, LSLFTHHMWIGGFLIVGAAAHAAIFMV, AIISHLNWVCIFLGFHSFGLYIH, and FLVHHIHAFTIHVTVLILL. Residues Cys-573 and Cys-582 each coordinate [4Fe-4S] cluster. A run of 2 helical transmembrane segments spans residues 589–610 and 664–686; these read HVFLGLFWMYNSISVVIFHFSW and LSAYGLFFLGAHFVWAFSLMFLF. Chlorophyll a' is bound at residue His-675. Positions 683 and 691 each coordinate chlorophyll a. Residue Trp-692 participates in phylloquinone binding. The chain crosses the membrane as a helical span at residues 724–744; it reads AVGVTHYLLGGIATTWAFFLA.

Belongs to the PsaA/PsaB family. As to quaternary structure, the PsaA/B heterodimer binds the P700 chlorophyll special pair and subsequent electron acceptors. PSI consists of a core antenna complex that captures photons, and an electron transfer chain that converts photonic excitation into a charge separation. The eukaryotic PSI reaction center is composed of at least 11 subunits. The cofactor is P700 is a chlorophyll a/chlorophyll a' dimer, A0 is one or more chlorophyll a, A1 is one or both phylloquinones and FX is a shared 4Fe-4S iron-sulfur center..

It is found in the plastid. The protein localises to the chloroplast thylakoid membrane. The catalysed reaction is reduced [plastocyanin] + hnu + oxidized [2Fe-2S]-[ferredoxin] = oxidized [plastocyanin] + reduced [2Fe-2S]-[ferredoxin]. Its function is as follows. PsaA and PsaB bind P700, the primary electron donor of photosystem I (PSI), as well as the electron acceptors A0, A1 and FX. PSI is a plastocyanin-ferredoxin oxidoreductase, converting photonic excitation into a charge separation, which transfers an electron from the donor P700 chlorophyll pair to the spectroscopically characterized acceptors A0, A1, FX, FA and FB in turn. Oxidized P700 is reduced on the lumenal side of the thylakoid membrane by plastocyanin. The sequence is that of Photosystem I P700 chlorophyll a apoprotein A1 from Oryza nivara (Indian wild rice).